Reading from the N-terminus, the 469-residue chain is Aspartyl/glutamyl-tRNA(Asn/Gln) amidotransferase subunit B (469 aa).

The protein belongs to the GatB/GatE family. GatB subfamily. As to quaternary structure, heterotrimer of A, B and C subunits.

The enzyme catalyses L-glutamyl-tRNA(Gln) + L-glutamine + ATP + H2O = L-glutaminyl-tRNA(Gln) + L-glutamate + ADP + phosphate + H(+). It carries out the reaction L-aspartyl-tRNA(Asn) + L-glutamine + ATP + H2O = L-asparaginyl-tRNA(Asn) + L-glutamate + ADP + phosphate + 2 H(+). In terms of biological role, allows the formation of correctly charged Asn-tRNA(Asn) or Gln-tRNA(Gln) through the transamidation of misacylated Asp-tRNA(Asn) or Glu-tRNA(Gln) in organisms which lack either or both of asparaginyl-tRNA or glutaminyl-tRNA synthetases. The reaction takes place in the presence of glutamine and ATP through an activated phospho-Asp-tRNA(Asn) or phospho-Glu-tRNA(Gln). This is Aspartyl/glutamyl-tRNA(Asn/Gln) amidotransferase subunit B from Methanococcus maripaludis (strain C6 / ATCC BAA-1332).